The primary structure comprises 100 residues: Small ribosomal subunit protein uS14c (100 aa).

This sequence belongs to the universal ribosomal protein uS14 family. As to quaternary structure, part of the 30S ribosomal subunit.

It is found in the plastid. In terms of biological role, binds 16S rRNA, required for the assembly of 30S particles. The protein is Small ribosomal subunit protein uS14c (rps14) of Cuscuta reflexa (Southern Asian dodder).